The primary structure comprises 322 residues: Quinolinate synthase (322 aa).

2 residues coordinate iminosuccinate: His37 and Ser54. Position 99 (Cys99) interacts with [4Fe-4S] cluster. Iminosuccinate is bound by residues 125-127 and Ser142; that span reads YVN. Cys185 contacts [4Fe-4S] cluster. Iminosuccinate contacts are provided by residues 211-213 and Thr228; that span reads HPE. Residue Cys278 coordinates [4Fe-4S] cluster.

This sequence belongs to the quinolinate synthase family. Type 2 subfamily. [4Fe-4S] cluster is required as a cofactor.

It localises to the cytoplasm. It carries out the reaction iminosuccinate + dihydroxyacetone phosphate = quinolinate + phosphate + 2 H2O + H(+). Its pathway is cofactor biosynthesis; NAD(+) biosynthesis; quinolinate from iminoaspartate: step 1/1. In terms of biological role, catalyzes the condensation of iminoaspartate with dihydroxyacetone phosphate to form quinolinate. This is Quinolinate synthase from Chlorobaculum tepidum (strain ATCC 49652 / DSM 12025 / NBRC 103806 / TLS) (Chlorobium tepidum).